Reading from the N-terminus, the 294-residue chain is Elongation factor Ts (294 aa).

An involved in Mg(2+) ion dislocation from EF-Tu region spans residues 80-83 (TDFV).

The protein belongs to the EF-Ts family.

Its subcellular location is the cytoplasm. Its function is as follows. Associates with the EF-Tu.GDP complex and induces the exchange of GDP to GTP. It remains bound to the aminoacyl-tRNA.EF-Tu.GTP complex up to the GTP hydrolysis stage on the ribosome. This chain is Elongation factor Ts, found in Polynucleobacter necessarius subsp. necessarius (strain STIR1).